The chain runs to 168 residues: Small ribosomal subunit protein uS5 (168 aa).

An S5 DRBM domain is found at 13-76; it reads LQEKLIAVNR…EKARRNMVTV (64 aa).

It belongs to the universal ribosomal protein uS5 family. As to quaternary structure, part of the 30S ribosomal subunit. Contacts proteins S4 and S8.

Its function is as follows. With S4 and S12 plays an important role in translational accuracy. In terms of biological role, located at the back of the 30S subunit body where it stabilizes the conformation of the head with respect to the body. The chain is Small ribosomal subunit protein uS5 from Shewanella amazonensis (strain ATCC BAA-1098 / SB2B).